Here is a 397-residue protein sequence, read N- to C-terminus: MSKIIAINAGSSSLKFQLFEMPSETVLTKGLVERIGLEDSIFTITVDGEKQKEITNIPDHAVAVNMLLKKLTENGIVKSLDEIGGIGHRVVHGGEKFADSVLITDEVLADIEELSDLAPLHNPANVVGIKAFQEVLPNVPAVAVFDTAFHQTMPESAFLYSLPYEYYEKFGIRKYGFHGTSHKYVTERAAELLGRPLESLSLLSCHLGNGASIAAVEGGKSIDTSMGFTPLAGVTMGTRSGNIDPALIPYIMEKTGQTVEEVVSVLNKKSGMLGLTGYSSDLRDIIAKEEEGDHRAKVALDVFVSRIHKYIGSYTARMKGVDAIIFTAGVGENSAIIRERVLEGLEYMGVYFDAKRNNVFGEEAFINFPHSPVKIIVIPTDEEVMIARDVLRLGNIG.

N8 is a binding site for Mg(2+). K15 provides a ligand contact to ATP. R89 contributes to the substrate binding site. Residue D146 is the Proton donor/acceptor of the active site. ATP is bound by residues 206–210, 281–283, and 329–333; these read HLGNG, DLR, and GVGEN. E382 serves as a coordination point for Mg(2+).

The protein belongs to the acetokinase family. In terms of assembly, homodimer. Mg(2+) is required as a cofactor. It depends on Mn(2+) as a cofactor.

Its subcellular location is the cytoplasm. It catalyses the reaction acetate + ATP = acetyl phosphate + ADP. It functions in the pathway metabolic intermediate biosynthesis; acetyl-CoA biosynthesis; acetyl-CoA from acetate: step 1/2. Its function is as follows. Catalyzes the formation of acetyl phosphate from acetate and ATP. Can also catalyze the reverse reaction. This chain is Acetate kinase, found in Bacillus anthracis.